Here is a 1114-residue protein sequence, read N- to C-terminus: Filamentous growth regulator 23 (1114 aa).

The first 21 residues, 1-21, serve as a signal peptide directing secretion; that stretch reads MFASYLLLVLWIIRLVPTTHA. Disordered stretches follow at residues 232–256 and 284–314; these read GSET…PSTT and SSSI…TSSS. Over residues 240–252 the composition is skewed to pro residues; that stretch reads TTAPKPVETPSPE. N382, N397, N475, N490, N506, N539, N565, N591, N637, N687, and N739 each carry an N-linked (GlcNAc...) asparagine glycan. Positions 392–430 are disordered; the sequence is SETTTNESSSYTDEPSSSEEITNTYEPSSSTESSTTDQF. Positions 764-784 are disordered; that stretch reads TSTLTSSHTSDNEKPASLSSS. An N-linked (GlcNAc...) asparagine glycan is attached at N831. 2 stretches are compositionally biased toward low complexity: residues 844-910 and 922-941; these read SASS…SSSS and SSSV…ESSS. A disordered region spans residues 844–963; that stretch reads SASSSYHSSE…ANENTSEITT (120 aa). Residues 942–963 show a composition bias toward polar residues; sequence NGLVSTVTESSTANENTSEITT. N957, N966, and N1070 each carry an N-linked (GlcNAc...) asparagine glycan. The GPI-anchor amidated asparagine moiety is linked to residue N1089. Positions 1090–1114 are cleaved as a propeptide — removed in mature form; it reads ANSLGLKNGDNSWIIGIMMIGLLMI.

The protein localises to the cell membrane. Functionally, putative adhesin which may be involved in cell adhesion and virulence. Involved in the regulation of filamentous growth. This is Filamentous growth regulator 23 (FGR23) from Candida albicans (strain SC5314 / ATCC MYA-2876) (Yeast).